The sequence spans 476 residues: Rho GTPase-activating protein 68F (476 aa).

Disordered regions lie at residues 1–35 and 241–266; these read MDAHSRFAPRLPGPAINPIVDNSDEPQPSLSDLHD and DKLNPSRKPSTPPPSSNINASRQQQH. A phosphoserine mark is found at Ser29 and Ser31. The 154-residue stretch at 91 to 244 folds into the CRAL-TRIO domain; that stretch reads SENFQTPRNK…NICDLDDKLN (154 aa). Residue Thr251 is modified to Phosphothreonine. Polar residues predominate over residues 257–266; that stretch reads NINASRQQQH. Residues 276–464 form the Rho-GAP domain; that stretch reads VPLKFIVMNS…FVLQNHKDIY (189 aa).

Functions as a GTPase-activating protein (GAP) for RhoA/Rho1 during gastrulation by converting it to an inactive GDP-bound state. In Drosophila melanogaster (Fruit fly), this protein is Rho GTPase-activating protein 68F (RhoGAP68F).